Here is a 744-residue protein sequence, read N- to C-terminus: Protein pthb1 homolog (744 aa).

The segment covering 722 to 733 (EHSPKELPKIRE) has biased composition (basic and acidic residues). The tract at residues 722 to 744 (EHSPKELPKIREEEEEEEQQVTA) is disordered. Residues 734–744 (EEEEEEQQVTA) show a composition bias toward acidic residues.

In terms of assembly, part of BBSome complex, that contains bbs-1, bbs-2, bbs-4, bbs-5, osm-12, bbs-8/ttc-8 and bbs-9. Interacts with bbs-1.

Component of the BBSome complex. The BBSome complex is thought to function as a coat complex required for sorting of specific membrane proteins to the primary cilia. The BBSome complex is required for ciliogenesis but is dispensable for centriolar satellite function. Required for proper BBSome complex assembly and its ciliary localization. Required for cilia biogenesis and both the assembly and movement of intraflagellar transport proteins along the ciliary axoneme. In ciliated sensory neurons, required for the sensation of nitric oxide and avoidance of NO-producing organisms like P.aeruginosa. This is Protein pthb1 homolog from Caenorhabditis elegans.